Reading from the N-terminus, the 182-residue chain is Ribosome hibernation promotion factor (182 aa).

The protein belongs to the HPF/YfiA ribosome-associated protein family. Long HPF subfamily. In terms of assembly, interacts with 100S ribosomes.

The protein localises to the cytoplasm. Required for dimerization of active 70S ribosomes into 100S ribosomes in stationary phase; 100S ribosomes are translationally inactive and sometimes present during exponential growth. In Streptococcus pyogenes serotype M6 (strain ATCC BAA-946 / MGAS10394), this protein is Ribosome hibernation promotion factor.